The sequence spans 187 residues: Small ribosomal subunit protein uS5 (187 aa).

An S5 DRBM domain is found at methionine 21–valine 84.

Belongs to the universal ribosomal protein uS5 family. As to quaternary structure, part of the 30S ribosomal subunit. Contacts proteins S4 and S8.

With S4 and S12 plays an important role in translational accuracy. Functionally, located at the back of the 30S subunit body where it stabilizes the conformation of the head with respect to the body. This is Small ribosomal subunit protein uS5 from Mesorhizobium japonicum (strain LMG 29417 / CECT 9101 / MAFF 303099) (Mesorhizobium loti (strain MAFF 303099)).